Consider the following 88-residue polypeptide: MKTSVIFVLIVLNLMWSGEAQEVARTYCGSHLADTLADLCFGVVKRGGAQYAPYFWQKAYLGSRGKRGVVDECCFRPCTLDVLASYCG.

The signal sequence occupies residues 1 to 18; that stretch reads MKTSVIFVLIVLNLMWSG. 3 cysteine pairs are disulfide-bonded: Cys28-Cys74, Cys40-Cys87, and Cys73-Cys78. Positions 47-65 are cleaved as a propeptide — c peptide like; that stretch reads GGAQYAPYFWQKAYLGSRG.

This sequence belongs to the insulin family. In terms of assembly, heterodimer of a B chain and an A chain linked by two disulfide bonds.

It localises to the secreted. Functionally, brain peptide responsible for activation of prothoracic glands to produce ecdysone in insects. This is Bombyxin B-8 (BBXB8) from Bombyx mori (Silk moth).